The primary structure comprises 610 residues: Myosin light chain kinase 2, skeletal/cardiac muscle (610 aa).

Disordered regions lie at residues Met-1–Ser-168 and Val-196–Gln-240. The residue at position 2 (Ala-2) is an N-acetylalanine. Composition is skewed to basic and acidic residues over residues Ser-32–Pro-63 and Lys-70–Asp-82. The span at Ser-94–Gly-109 shows a compositional bias: gly residues. A compositionally biased stretch (basic and acidic residues) spans Gly-141–Arg-157. Residues Ser-160, Ser-166, and Ser-168 each carry the phosphoserine modification. One can recognise a Protein kinase domain in the interval Met-299–Leu-554. Residues Leu-305–Val-313 and Lys-328 contribute to the ATP site. The active-site Proton acceptor is Asp-420. Thr-459 is modified (phosphothreonine). The calmodulin-binding stretch occupies residues Ile-588–Ser-600.

The protein belongs to the protein kinase superfamily. CAMK Ser/Thr protein kinase family. In terms of assembly, may interact with centrin.

Its subcellular location is the cytoplasm. The catalysed reaction is L-seryl-[myosin light chain] + ATP = O-phospho-L-seryl-[myosin light chain] + ADP + H(+). The enzyme catalyses L-threonyl-[myosin light chain] + ATP = O-phospho-L-threonyl-[myosin light chain] + ADP + H(+). Functionally, implicated in the level of global muscle contraction and cardiac function. Phosphorylates a specific serine in the N-terminus of a myosin light chain. This chain is Myosin light chain kinase 2, skeletal/cardiac muscle (Mylk2), found in Rattus norvegicus (Rat).